The primary structure comprises 242 residues: Small ribosomal subunit protein uS2 (242 aa).

Belongs to the universal ribosomal protein uS2 family.

The polypeptide is Small ribosomal subunit protein uS2 (Shewanella woodyi (strain ATCC 51908 / MS32)).